Here is a 571-residue protein sequence, read N- to C-terminus: MSERKNLTDYVYKMVASLVQVGVENVVVSPGSRSTPLAYAVASTKQIKMYRQVDERSAAFFALGLAKATAKPVVLLCTSGTAAANYFPAIVEASYARVPLIIITADRPHELREVGAPQTINQPHLYGSHVKWSVDFPLADGAAPTLPFIERHIARAVAIATSAPFGPVHLNVPFREPLLIDLQDELPTMTFKHSSMGQLIPTTSAMQELSSILNSTRKGFMIVGELALGTDLAFLWEFVRQLKWPVIVESLSNMRAAVPEDCLPYLVTTYDAIMKSEDFKALVQPDTVLRIGAQPVSKFIMQFITKTQPSAYVIIDEDPMFRDATGVSTHFIHANIDQWLTHLTLTNTAFEESYLAEWQKANQLASTYIEQYSEIEKDEGAMVSRLLKMIPDGSDIFVSSSMPVRDIDTFLLATPKDIRFFANRGTNGIDGVVSTALGFSQGNDRETYLLIGDLAFLHDVNGLIATRYQECNLTILVMNNDGGGIFSYLPQSTVEAHYEDLFGTPTALEFQDIAHMYNMDYVRVDTIAELSGKFSSVKKRPLRLVEIFTDRAENVQAHRELWNRINAELKA.

Belongs to the TPP enzyme family. MenD subfamily. Homodimer. Mg(2+) serves as cofactor. Requires Mn(2+) as cofactor. It depends on thiamine diphosphate as a cofactor.

It carries out the reaction isochorismate + 2-oxoglutarate + H(+) = 5-enolpyruvoyl-6-hydroxy-2-succinyl-cyclohex-3-ene-1-carboxylate + CO2. It participates in quinol/quinone metabolism; 1,4-dihydroxy-2-naphthoate biosynthesis; 1,4-dihydroxy-2-naphthoate from chorismate: step 2/7. Its pathway is quinol/quinone metabolism; menaquinone biosynthesis. Functionally, catalyzes the thiamine diphosphate-dependent decarboxylation of 2-oxoglutarate and the subsequent addition of the resulting succinic semialdehyde-thiamine pyrophosphate anion to isochorismate to yield 2-succinyl-5-enolpyruvyl-6-hydroxy-3-cyclohexene-1-carboxylate (SEPHCHC). The chain is 2-succinyl-5-enolpyruvyl-6-hydroxy-3-cyclohexene-1-carboxylate synthase from Lysinibacillus sphaericus (strain C3-41).